Here is a 182-residue protein sequence, read N- to C-terminus: uncharacterized protein (182 aa).

An N-terminal signal peptide occupies residues 1–29 (MKKLLKKLVVLFLSSLVIIFNVWYFIICA). Residues 152–174 (WNLYFWTAASYNAVIFVFVLVIV) traverse the membrane as a helical segment.

It is found in the membrane. This is an uncharacterized protein from Bacillus subtilis (strain 168).